Here is a 443-residue protein sequence, read N- to C-terminus: Glutamate--tRNA ligase 1 (443 aa).

The 'HIGH' region motif lies at 9 to 19; sequence PSPTGYLHVGN. The 'KMSKS' region signature appears at 238 to 242; sequence KISKR. Lysine 241 contributes to the ATP binding site.

This sequence belongs to the class-I aminoacyl-tRNA synthetase family. Glutamate--tRNA ligase type 1 subfamily. Monomer.

The protein localises to the cytoplasm. The catalysed reaction is tRNA(Glu) + L-glutamate + ATP = L-glutamyl-tRNA(Glu) + AMP + diphosphate. Its function is as follows. Catalyzes the attachment of glutamate to tRNA(Glu) in a two-step reaction: glutamate is first activated by ATP to form Glu-AMP and then transferred to the acceptor end of tRNA(Glu). The protein is Glutamate--tRNA ligase 1 of Ehrlichia ruminantium (strain Welgevonden).